Here is a 1061-residue protein sequence, read N- to C-terminus: E3 ubiquitin-protein ligase Smurf1 (1061 aa).

Positions 1–116 (MNKLDYPRRN…KGAGFQRLDL (116 aa)) constitute a C2 domain. 2 disordered regions span residues 143–176 (SGNPLAIVGPSGDVRGPSEDDSSEDSLPEGWEER) and 188–496 (HATK…SGQR). One can recognise a WW 1 domain in the interval 167-200 (DSLPEGWEERRTDNGRVYYVNHATKSTQWDRPRQ). 2 stretches are compositionally biased toward polar residues: residues 207 to 225 (SHATSPQQRHNTHNGNSGD) and 233 to 255 (TRSTTCTNLMNNGHRSRDLSVTA). Residue serine 262 is modified to Phosphoserine. Over residues 264 to 273 (EILSSVGKEN) the composition is skewed to polar residues. Low complexity-rich tracts occupy residues 274–300 (TSPTTPVSATTTPGKKTSSSNSSSAGG) and 311–322 (PATPTSSTTSAS). The span at 348 to 359 (TPTSPTGQQNYV) shows a compositional bias: polar residues. Positions 360–378 (NGNAQNGSTSGNGSGQAAQ) are enriched in low complexity. Over residues 379–392 (PQSASNGWTQEDAA) the composition is skewed to polar residues. Low complexity predominate over residues 393-409 (TTTSPSTTTSPPRHSQS). At threonine 412 the chain carries Phosphothreonine. At serine 416 the chain carries Phosphoserine. Polar residues predominate over residues 417 to 439 (PPASVTPSANGNVHSPNANSTPA). Residues 480–494 (RNGGTSGGGGGGGSG) are compositionally biased toward gly residues. WW domains lie at 513–546 (LDLPPGYEMRTTQQGQVYFYHIPTGVSTWHDPRI) and 561–594 (GPLPSGWEQRKTASGRVYFVDHNNRTTQFTDPRL). Positions 513–602 (LDLPPGYEMR…RLSGSILQMI (90 aa)) are interaction with MAD. Low complexity-rich tracts occupy residues 608 to 617 (PPTSAANAGT) and 624 to 656 (TPATPSAAAAVPPQATPASNATPTTLTTTTNPP). The segment at 608-661 (PPTSAANAGTPAPPSATPATPSAAAAVPPQATPASNATPTTLTTTTNPPHRIVP) is disordered. An HECT domain is found at 723-1061 (RAKDMRKRLM…VEETCGFAVE (339 aa)). Catalysis depends on cysteine 1029, which acts as the Glycyl thioester intermediate.

As to quaternary structure, interacts with phosphorylated MAD.

It carries out the reaction S-ubiquitinyl-[E2 ubiquitin-conjugating enzyme]-L-cysteine + [acceptor protein]-L-lysine = [E2 ubiquitin-conjugating enzyme]-L-cysteine + N(6)-ubiquitinyl-[acceptor protein]-L-lysine.. The protein operates within protein modification; protein ubiquitination. Its function is as follows. E3 ubiquitin-protein ligase which accepts ubiquitin from an E2 ubiquitin-conjugating enzyme in the form of a thioester and then directly transfers the ubiquitin to targeted substrates. Down-regulates Dpp signaling after gastrulation by promoting MAD ubiquitination and subsequent degradation. This chain is E3 ubiquitin-protein ligase Smurf1, found in Drosophila melanogaster (Fruit fly).